Here is a 1616-residue protein sequence, read N- to C-terminus: Protein Shroom2 (1616 aa).

The region spanning 26-108 is the PDZ domain; that stretch reads LVEVQLSGGA…TLKLVVKRRS (83 aa). Disordered regions lie at residues 128–159 and 183–229; these read ELAA…LSSS and HPSS…KADT. Residues 150–159 show a composition bias toward low complexity; it reads SSSSHDLSSS. Composition is skewed to polar residues over residues 186 to 197 and 220 to 229; these read SRLSVAKSNSSI and PDHTLSKADT. Position 231 is a phosphoserine (S231). Positions 247–259 are enriched in low complexity; that stretch reads QGGRQAQAAGDPQ. Disordered regions lie at residues 247 to 475, 502 to 678, 695 to 790, 802 to 869, 881 to 1100, 1115 to 1184, 1268 to 1302, and 1363 to 1389; these read QGGR…SGWQ, GALE…PLAG, TSFK…SEDT, EETS…LPRR, KEQR…PSPA, PSVF…LTDK, AEPE…PGLS, and QRRK…VPAA. Pro residues predominate over residues 312-321; sequence SSPPPPPPPL. Phosphoserine is present on residues S313 and S325. Positions 343 to 356 are enriched in low complexity; the sequence is AAAAQHFTALAQAQ. The segment covering 358–370 has biased composition (basic and acidic residues); it reads RGDRRPELTDRPW. Positions 405–415 are enriched in low complexity; it reads SSRLQASLSSS. S413 is subject to Phosphoserine. One can recognise an ASD1 domain in the interval 684 to 773; that stretch reads LKEAQARVLR…SEPEKMNEVG (90 aa). Basic and acidic residues-rich tracts occupy residues 754–770 and 821–830; these read FTAE…EKMN and IPRDKPERPR. The segment covering 842-854 has biased composition (polar residues); that stretch reads WSRTTSLGDSLNA. Phosphoserine occurs at positions 851, 897, 921, 922, and 924. A Phosphothreonine modification is found at T925. The segment covering 926–958 has biased composition (basic and acidic residues); the sequence is DHYKQEASVELRRQAGDPGEPREELPSAVRAEE. S974 is subject to Phosphoserine. A compositionally biased stretch (polar residues) spans 975–994; the sequence is PGSQQHPPSQKAPNPPTFSE. S1036 and S1039 each carry phosphoserine. Over residues 1068–1077 the composition is skewed to basic and acidic residues; the sequence is PKREPRRYRA. Residues 1159 to 1176 show a composition bias toward polar residues; that stretch reads LRLQTATMETSRSPSPQF. A phosphoserine mark is found at S1171, S1173, and S1297. In terms of domain architecture, ASD2 spans 1317-1611; that stretch reads EELAREIVGK…QLKCLLDSLQ (295 aa).

The protein belongs to the shroom family. In terms of assembly, interacts with F-actin. As to expression, abundant in retina and melanoma; also in brain, placenta, lung, kidney and pancreas.

The protein localises to the apical cell membrane. The protein resides in the cell junction. Its subcellular location is the tight junction. It is found in the cytoplasm. It localises to the cytoskeleton. Its function is as follows. May be involved in endothelial cell morphology changes during cell spreading. In the retinal pigment epithelium, may regulate the biogenesis of melanosomes and promote their association with the apical cell surface by inducing gamma-tubulin redistribution. This Homo sapiens (Human) protein is Protein Shroom2 (SHROOM2).